A 261-amino-acid polypeptide reads, in one-letter code: Taurine import ATP-binding protein TauB (261 aa).

The ABC transporter domain maps to 4–233 (LTADRVSVRY…RWRAGDSARA (230 aa)). 38–45 (GPSGCGKT) is a binding site for ATP.

It belongs to the ABC transporter superfamily. Taurine importer (TC 3.A.1.17.1) family. The complex is composed of two ATP-binding proteins (TauB), two transmembrane proteins (TauC) and a solute-binding protein (TauA).

It localises to the cell inner membrane. It catalyses the reaction taurine(out) + ATP + H2O = taurine(in) + ADP + phosphate + H(+). Its function is as follows. Part of the ABC transporter complex TauABC involved in taurine import. Responsible for energy coupling to the transport system. The polypeptide is Taurine import ATP-binding protein TauB (Chromobacterium violaceum (strain ATCC 12472 / DSM 30191 / JCM 1249 / CCUG 213 / NBRC 12614 / NCIMB 9131 / NCTC 9757 / MK)).